The following is a 361-amino-acid chain: MLYNLLLPHIHNSHIANLFHYITFRGGLAIIITLSLSFITGPILIEFLRSLQKNGQPIRSDGPESHQTKVGTPTMGGIMIILSSCLSTLLLADLTNKYIWITLFGFISFGIIGFMDDYAKVTKDNHYGVRGKSKLLLQGIISFIICVLLEYLDKSPSHLLNVPFFKNLSLDLGYCYIVFAIFVIVGSSNAVNLTDGLDGLATVPIAFTAGSFALISYLVGNLIYSNYLQLTYIPNTGELTVLCAGLVGSCLGFLWFNAQPAEVFMGDTGSLSLGGVLGIISVITKHEIVLAIVGGLFVIETASVILQVYYFKATKGKRIFKMAPLHHHFEKHGWAESKVVIRFWIISVIFALIGLSSLKLR.

The next 10 helical transmembrane spans lie at 28–48 (LAII…IEFL), 74–94 (TMGG…LADL), 99–119 (IWIT…DDYA), 133–153 (SKLL…EYLD), 168–188 (LSLD…VGSS), 203–223 (VPIA…GNLI), 236–256 (TGEL…FLWF), 263–283 (VFMG…ISVI), 288–308 (IVLA…ILQV), and 338–358 (KVVI…LSSL).

It belongs to the glycosyltransferase 4 family. MraY subfamily. It depends on Mg(2+) as a cofactor.

It localises to the cell inner membrane. The catalysed reaction is UDP-N-acetyl-alpha-D-muramoyl-L-alanyl-gamma-D-glutamyl-meso-2,6-diaminopimeloyl-D-alanyl-D-alanine + di-trans,octa-cis-undecaprenyl phosphate = di-trans,octa-cis-undecaprenyl diphospho-N-acetyl-alpha-D-muramoyl-L-alanyl-D-glutamyl-meso-2,6-diaminopimeloyl-D-alanyl-D-alanine + UMP. The protein operates within cell wall biogenesis; peptidoglycan biosynthesis. Catalyzes the initial step of the lipid cycle reactions in the biosynthesis of the cell wall peptidoglycan: transfers peptidoglycan precursor phospho-MurNAc-pentapeptide from UDP-MurNAc-pentapeptide onto the lipid carrier undecaprenyl phosphate, yielding undecaprenyl-pyrophosphoryl-MurNAc-pentapeptide, known as lipid I. This Rickettsia africae (strain ESF-5) protein is Phospho-N-acetylmuramoyl-pentapeptide-transferase.